The following is a 342-amino-acid chain: tRNA N6-adenosine threonylcarbamoyltransferase (342 aa).

The Fe cation site is built by H120 and H124. Substrate-binding positions include 142–146, D175, G188, D192, and N281; that span reads VVSGG. Fe cation is bound at residue D310.

It belongs to the KAE1 / TsaD family. Fe(2+) serves as cofactor.

It localises to the cytoplasm. It catalyses the reaction L-threonylcarbamoyladenylate + adenosine(37) in tRNA = N(6)-L-threonylcarbamoyladenosine(37) in tRNA + AMP + H(+). Required for the formation of a threonylcarbamoyl group on adenosine at position 37 (t(6)A37) in tRNAs that read codons beginning with adenine. Is involved in the transfer of the threonylcarbamoyl moiety of threonylcarbamoyl-AMP (TC-AMP) to the N6 group of A37, together with TsaE and TsaB. TsaD likely plays a direct catalytic role in this reaction. The polypeptide is tRNA N6-adenosine threonylcarbamoyltransferase (Geobacillus thermodenitrificans (strain NG80-2)).